The following is a 151-amino-acid chain: Putative pre-16S rRNA nuclease (151 aa).

It belongs to the YqgF nuclease family.

The protein resides in the cytoplasm. In terms of biological role, could be a nuclease involved in processing of the 5'-end of pre-16S rRNA. This is Putative pre-16S rRNA nuclease from Neisseria meningitidis serogroup C (strain 053442).